We begin with the raw amino-acid sequence, 274 residues long: Large ribosomal subunit protein uL2 (274 aa).

The segment at 224–274 (VAMNPVDHPHGGGEGRTSGGRHPVTPWGIPTKGYKTRRNKRSNKLIVQKRK) is disordered. Positions 257-274 (YKTRRNKRSNKLIVQKRK) are enriched in basic residues.

The protein belongs to the universal ribosomal protein uL2 family. Part of the 50S ribosomal subunit. Forms a bridge to the 30S subunit in the 70S ribosome.

One of the primary rRNA binding proteins. Required for association of the 30S and 50S subunits to form the 70S ribosome, for tRNA binding and peptide bond formation. It has been suggested to have peptidyltransferase activity; this is somewhat controversial. Makes several contacts with the 16S rRNA in the 70S ribosome. This Francisella tularensis subsp. tularensis (strain FSC 198) protein is Large ribosomal subunit protein uL2.